Reading from the N-terminus, the 426-residue chain is Histidine--tRNA ligase (426 aa).

This sequence belongs to the class-II aminoacyl-tRNA synthetase family. As to quaternary structure, homodimer.

It is found in the cytoplasm. The catalysed reaction is tRNA(His) + L-histidine + ATP = L-histidyl-tRNA(His) + AMP + diphosphate + H(+). The chain is Histidine--tRNA ligase from Streptococcus pyogenes serotype M5 (strain Manfredo).